The primary structure comprises 425 residues: MVYIEAIDAQEVMDSRGNPTVRAAVRLSDGTRAAAIVPSGASTGKREALELRDGDKERYLGKGVLKACANIKTEIAAQLDGVSPYDQSKIDLILKKIDGTENYSELGANATLGVSMAIARASAQSLRLPLYRYLGGSNALTLPTPMLNIINGGSHADNTVDFQEYMIMPLGFDTFAESLRASAEIYHHLKAILKGSGHITSIGDEGGFAPNLKNNEEPIEIILKAIEQAGYKPLDEIAIALDVASSELVDENGMYHLAGEGKVLDSAGMIAYYENLVAKYPIVSIEDGLSEDDWEGWKLLTQKLGNKIQLVGDDLFVTNKKILQEGIEKNIANAILIKPNQIGSVSETMQSVRLAQRNNYKCIMSHRSGESEDTFIADFAVALNTGEIKTGSTARSERIAKYNRLLEIEREISDAEYIGKTLFKR.

Glutamine 163 is a binding site for (2R)-2-phosphoglycerate. The Proton donor role is filled by glutamate 205. 3 residues coordinate Mg(2+): aspartate 242, glutamate 286, and aspartate 313. (2R)-2-phosphoglycerate is bound by residues lysine 338, arginine 367, serine 368, and lysine 389. The Proton acceptor role is filled by lysine 338.

The protein belongs to the enolase family. Mg(2+) is required as a cofactor.

The protein resides in the cytoplasm. It localises to the secreted. Its subcellular location is the cell surface. It catalyses the reaction (2R)-2-phosphoglycerate = phosphoenolpyruvate + H2O. The protein operates within carbohydrate degradation; glycolysis; pyruvate from D-glyceraldehyde 3-phosphate: step 4/5. Functionally, catalyzes the reversible conversion of 2-phosphoglycerate (2-PG) into phosphoenolpyruvate (PEP). It is essential for the degradation of carbohydrates via glycolysis. The protein is Enolase of Helicobacter hepaticus (strain ATCC 51449 / 3B1).